Reading from the N-terminus, the 419-residue chain is Phosphoglycerate kinase (419 aa).

Substrate-binding positions include 42 to 44, Arg58, 81 to 84, Arg135, and Arg168; these read DLN and HLGR. Residues Lys219, Glu341, and 367 to 370 contribute to the ATP site; that span reads GGDT.

The protein belongs to the phosphoglycerate kinase family. In terms of assembly, monomer.

The protein localises to the cytoplasm. The catalysed reaction is (2R)-3-phosphoglycerate + ATP = (2R)-3-phospho-glyceroyl phosphate + ADP. Its pathway is carbohydrate degradation; glycolysis; pyruvate from D-glyceraldehyde 3-phosphate: step 2/5. The protein is Phosphoglycerate kinase of Ralstonia nicotianae (strain ATCC BAA-1114 / GMI1000) (Ralstonia solanacearum).